Reading from the N-terminus, the 115-residue chain is Large ribosomal subunit protein bL20 (115 aa).

This sequence belongs to the bacterial ribosomal protein bL20 family.

Binds directly to 23S ribosomal RNA and is necessary for the in vitro assembly process of the 50S ribosomal subunit. It is not involved in the protein synthesizing functions of that subunit. This chain is Large ribosomal subunit protein bL20, found in Prochlorococcus marinus (strain MIT 9312).